A 326-amino-acid chain; its full sequence is Vitamin B12 import system permease protein BtuC (326 aa).

9 consecutive transmembrane segments (helical) span residues 15–35, 61–81, 88–108, 112–132, 146–166, 184–204, 240–260, 274–294, and 302–322; these read WLLC…CAGE, LAVL…QALF, PGLL…VLLG, LPNW…TLIL, LLAG…AIYF, GGVD…LLWI, GWMV…GLVI, VLLP…DIVA, and ELPI…WLLL.

This sequence belongs to the binding-protein-dependent transport system permease family. FecCD subfamily. In terms of assembly, the complex is composed of two ATP-binding proteins (BtuD), two transmembrane proteins (BtuC) and a solute-binding protein (BtuF).

It localises to the cell inner membrane. Functionally, part of the ABC transporter complex BtuCDF involved in vitamin B12 import. Involved in the translocation of the substrate across the membrane. The chain is Vitamin B12 import system permease protein BtuC from Escherichia coli O7:K1 (strain IAI39 / ExPEC).